The following is a 344-amino-acid chain: L-rhamnose-proton symporter (344 aa).

10 consecutive transmembrane segments (helical) span residues 4–24 (AITM…CFYA), 38–58 (WSVG…ALLL), 68–88 (FNLS…IGNI), 101–121 (MGIG…TPII), 137–157 (TLLG…AGQL), 175–195 (LLLA…MNAA), 214–234 (LPSY…FCFI), 259–279 (ILLS…YAWG), 290–310 (MSWM…GLVL), and 321–341 (VAVL…VGLG).

Belongs to the L-rhamnose transporter (TC 2.A.7.6) family.

It localises to the cell inner membrane. The catalysed reaction is L-rhamnopyranose(in) + H(+)(in) = L-rhamnopyranose(out) + H(+)(out). Uptake of L-rhamnose across the cytoplasmic membrane with the concomitant transport of protons into the cell (symport system). The chain is L-rhamnose-proton symporter from Salmonella dublin (strain CT_02021853).